A 207-amino-acid polypeptide reads, in one-letter code: MPKVSLFNQTGSQVGEIELADNVFGVEPNESVLHDAVVMQQASLRQGTHKTKGRSEVRGGGRKPWRQKGTGRARQGSIRSPQWVGGGVVFGPTPRSYSYKLPKKVRRLAIKSALSSKVKDSELVVLDDLKLEAIKTKAMKDVLASLSVDSKALVVTADYNENVALSARNLPGITFLTADGVNVLDLLKHDKLVITKDAVEKVEEVLA.

The segment at 44 to 77 (LRQGTHKTKGRSEVRGGGRKPWRQKGTGRARQGS) is disordered. The span at 60-71 (GGRKPWRQKGTG) shows a compositional bias: basic residues.

This sequence belongs to the universal ribosomal protein uL4 family. Part of the 50S ribosomal subunit.

Functionally, one of the primary rRNA binding proteins, this protein initially binds near the 5'-end of the 23S rRNA. It is important during the early stages of 50S assembly. It makes multiple contacts with different domains of the 23S rRNA in the assembled 50S subunit and ribosome. Forms part of the polypeptide exit tunnel. The chain is Large ribosomal subunit protein uL4 from Shouchella clausii (strain KSM-K16) (Alkalihalobacillus clausii).